A 379-amino-acid chain; its full sequence is Succinyl-diaminopimelate desuccinylase (379 aa).

His70 is a Zn(2+) binding site. The active site involves Asp72. Asp103 is a Zn(2+) binding site. The Proton acceptor role is filled by Glu137. Residues Glu138, Glu166, and His352 each coordinate Zn(2+).

It belongs to the peptidase M20A family. DapE subfamily. In terms of assembly, homodimer. Zn(2+) serves as cofactor. It depends on Co(2+) as a cofactor.

The enzyme catalyses N-succinyl-(2S,6S)-2,6-diaminopimelate + H2O = (2S,6S)-2,6-diaminopimelate + succinate. It participates in amino-acid biosynthesis; L-lysine biosynthesis via DAP pathway; LL-2,6-diaminopimelate from (S)-tetrahydrodipicolinate (succinylase route): step 3/3. Catalyzes the hydrolysis of N-succinyl-L,L-diaminopimelic acid (SDAP), forming succinate and LL-2,6-diaminopimelate (DAP), an intermediate involved in the bacterial biosynthesis of lysine and meso-diaminopimelic acid, an essential component of bacterial cell walls. This chain is Succinyl-diaminopimelate desuccinylase, found in Burkholderia multivorans (strain ATCC 17616 / 249).